The primary structure comprises 230 residues: Demethylmenaquinone methyltransferase (230 aa).

S-adenosyl-L-methionine is bound by residues threonine 62, aspartate 80, 100 to 101 (DG), and serine 117.

This sequence belongs to the class I-like SAM-binding methyltransferase superfamily. MenG/UbiE family.

The enzyme catalyses a 2-demethylmenaquinol + S-adenosyl-L-methionine = a menaquinol + S-adenosyl-L-homocysteine + H(+). The protein operates within quinol/quinone metabolism; menaquinone biosynthesis; menaquinol from 1,4-dihydroxy-2-naphthoate: step 2/2. In terms of biological role, methyltransferase required for the conversion of demethylmenaquinol (DMKH2) to menaquinol (MKH2). This Corynebacterium urealyticum (strain ATCC 43042 / DSM 7109) protein is Demethylmenaquinone methyltransferase.